The following is a 473-amino-acid chain: Tyrosine phenol-lyase (473 aa).

At lysine 257 the chain carries N6-(pyridoxal phosphate)lysine.

Belongs to the beta-eliminating lyase family. Homotetramer. Requires pyridoxal 5'-phosphate as cofactor.

It carries out the reaction L-tyrosine + H2O = phenol + pyruvate + NH4(+). This chain is Tyrosine phenol-lyase, found in Intrasporangium calvum (strain ATCC 23552 / DSM 43043 / JCM 3097 / NBRC 12989 / NCIMB 10167 / NRRL B-3866 / 7 KIP).